A 235-amino-acid polypeptide reads, in one-letter code: Probable transcriptional regulatory protein CFF8240_0424 (235 aa).

This sequence belongs to the TACO1 family.

Its subcellular location is the cytoplasm. This Campylobacter fetus subsp. fetus (strain 82-40) protein is Probable transcriptional regulatory protein CFF8240_0424.